The primary structure comprises 118 residues: Large ribosomal subunit protein bL20 (118 aa).

The protein belongs to the bacterial ribosomal protein bL20 family.

Functionally, binds directly to 23S ribosomal RNA and is necessary for the in vitro assembly process of the 50S ribosomal subunit. It is not involved in the protein synthesizing functions of that subunit. The protein is Large ribosomal subunit protein bL20 of Edwardsiella ictaluri (strain 93-146).